Reading from the N-terminus, the 224-residue chain is Glycerol-3-phosphate acyltransferase (224 aa).

6 helical membrane passes run 4-24 (FVIV…GSIN), 60-80 (LVIF…VYFV), 88-108 (SVVV…FPIW), 124-144 (IISV…LIII), 149-169 (IVSF…FIPW), and 182-202 (WPWW…IWSH).

This sequence belongs to the PlsY family. As to quaternary structure, probably interacts with PlsX.

It localises to the cell membrane. The enzyme catalyses an acyl phosphate + sn-glycerol 3-phosphate = a 1-acyl-sn-glycero-3-phosphate + phosphate. It participates in lipid metabolism; phospholipid metabolism. Functionally, catalyzes the transfer of an acyl group from acyl-phosphate (acyl-PO(4)) to glycerol-3-phosphate (G3P) to form lysophosphatidic acid (LPA). This enzyme utilizes acyl-phosphate as fatty acyl donor, but not acyl-CoA or acyl-ACP. This Mycoplasmopsis pulmonis (strain UAB CTIP) (Mycoplasma pulmonis) protein is Glycerol-3-phosphate acyltransferase.